The chain runs to 421 residues: Plant UBX domain-containing protein 5 (421 aa).

The 42-residue stretch at 4-45 (ETNENLINSFIEITSSSREEANFFLESHTWNLDAAVSTFLDN) folds into the UBA domain. Disordered regions lie at residues 46 to 171 (DAAA…MMVQ) and 292 to 338 (ENFT…PSRG). Residues 69–84 (QSPSQSHSPDYTPSET) show a composition bias toward polar residues. Residues 85–102 (SPSPSRSRSASPSSRAAP) are compositionally biased toward low complexity. The 65-residue stretch at 231 to 295 (RIMHTITFWL…DLVRRGENFT (65 aa)) folds into the SEP domain. The segment covering 312–328 (GASGSGSSSAPQASSAP) has biased composition (low complexity). The region spanning 343–420 (PAAPTTSIQL…GIANAVVIQK (78 aa)) is the UBX domain.

In terms of assembly, interacts with CDC48A (non-hexameric) via its UBX domain.

The protein is Plant UBX domain-containing protein 5 of Arabidopsis thaliana (Mouse-ear cress).